The following is an 806-amino-acid chain: Acetyl-CoA decarbonylase/synthase complex subunit alpha 1 (806 aa).

The [4Fe-4S] cluster site is built by Cys73, Cys76, Cys77, Cys79, Cys84, and Cys94. His117 contacts CO. His250, Cys278, and Cys323 together coordinate [Ni-4Fe-4S] cluster. 2 consecutive 4Fe-4S ferredoxin-type domains span residues 407–436 and 446–475; these read DEEF…IPEA and SYLD…LNII. Cys417, Cys420, Cys423, Cys427, Cys455, Cys458, Cys461, and Cys465 together coordinate [4Fe-4S] cluster. Residues Cys523, Cys552, and Cys587 each coordinate [Ni-4Fe-4S] cluster.

This sequence belongs to the Ni-containing carbon monoxide dehydrogenase family. As to quaternary structure, heterotetramer of two alpha and two epsilon subunits. The ACDS complex is made up of alpha, epsilon, beta, gamma and delta subunits with a probable stoichiometry of (alpha(2)epsilon(2))(4)-beta(8)-(gamma(1)delta(1))(8). The cofactor is [4Fe-4S] cluster. [Ni-4Fe-4S] cluster serves as cofactor.

The enzyme catalyses CO + 2 oxidized [2Fe-2S]-[ferredoxin] + H2O = 2 reduced [2Fe-2S]-[ferredoxin] + CO2 + 2 H(+). Its pathway is one-carbon metabolism; methanogenesis from acetate. With respect to regulation, carbon monoxide dehydrogenase activity is inhibited by KCN and is rapidly inactivated by O(2). Part of the ACDS complex that catalyzes the reversible cleavage of acetyl-CoA, allowing growth on acetate as sole source of carbon and energy. The alpha-epsilon subcomponent functions as a carbon monoxide dehydrogenase. This is Acetyl-CoA decarbonylase/synthase complex subunit alpha 1 from Methanosarcina barkeri (strain Fusaro / DSM 804).